The chain runs to 91 residues: ATP synthase epsilon chain (91 aa).

It belongs to the ATPase epsilon chain family. As to quaternary structure, F-type ATPases have 2 components, CF(1) - the catalytic core - and CF(0) - the membrane proton channel. CF(1) has five subunits: alpha(3), beta(3), gamma(1), delta(1), epsilon(1). CF(0) has three main subunits: a, b and c.

It is found in the cell membrane. Produces ATP from ADP in the presence of a proton gradient across the membrane. The protein is ATP synthase epsilon chain (atpC) of Micrococcus luteus (strain ATCC 4698 / DSM 20030 / JCM 1464 / CCM 169 / CCUG 5858 / IAM 1056 / NBRC 3333 / NCIMB 9278 / NCTC 2665 / VKM Ac-2230) (Micrococcus lysodeikticus).